The primary structure comprises 192 residues: A-type ATP synthase subunit E (192 aa).

It belongs to the V-ATPase E subunit family. As to quaternary structure, has multiple subunits with at least A(3), B(3), C, D, E, F, H, I and proteolipid K(x).

Its subcellular location is the cell membrane. Its function is as follows. Component of the A-type ATP synthase that produces ATP from ADP in the presence of a proton gradient across the membrane. The sequence is that of A-type ATP synthase subunit E from Methanocorpusculum labreanum (strain ATCC 43576 / DSM 4855 / Z).